A 313-amino-acid chain; its full sequence is MENCSFHVPSLEEICSVLKSGLLKNFADVSVIVTECPDLSKEPFEFPVKGLCGKSRIADVGGVPYLVPKPRLDKVYNVNAVAKKIGLPGAYILGAGATSHKSLGMNAELIFSVQAENESIQAVNKSYVASVNPGDGSCLLEKYRDRNNDNDFGLLSNLYACEGKPGKVIEVSVKRRIGQDNFVSCMRKSLKTHYGEKAVGLGGTFLLKEGKAKLHVMPREYSACPLNTDEDVNGWLKFYEMKAPLICQSVFVSHDPGYDLRLEHTHCFSHHGEGGHYHYDTTPDTVEYLGYFHPAELLYRIDKPSATHMVGRD.

Residues histidine 264, histidine 266, and histidine 276 each contribute to the Zn(2+) site.

As to quaternary structure, monomer. Requires Zn(2+) as cofactor.

It localises to the nucleus. It is found in the cytoplasm. Exhibits ester hydrolase activity on the substrate p-nitrophenyl acetate, in vitro. May regulate DNA damage and repair by regulating HIF1A degradation via chaperone-mediated autophagy (CMA). The chain is Ester hydrolase C11orf54 homolog from Xenopus tropicalis (Western clawed frog).